We begin with the raw amino-acid sequence, 446 residues long: Inward rectifier potassium channel 4 (446 aa).

Residues 1 to 55 (MHGHSRNGQAHVPRRKRRNRFVKKNGQCNVYFANLSNKSQRYMADIFTTCVDTRW) are Cytoplasmic-facing. Residues 56 to 80 (RYMLMIFSAAFLVSWLFFGLLFWCI) traverse the membrane as a helical segment. Topologically, residues 81–120 (AFFHGDLEPSPSGPTAGGPGGNGGGAAPTAAKPCIMHVNG) are extracellular. A val/Gly/Ala/Pro stretch region spans residues 91–111 (PSGPTAGGPGGNGGGAAPTAA). The helical; Pore-forming intramembrane region spans 121-132 (FLGAFLFSVETQ). The segment at residues 133-139 (TTIGYGF) is an intramembrane region (pore-forming). The Selectivity filter motif lies at 134 to 139 (TIGYGF). At 140-148 (RCVTEECPL) the chain is on the extracellular side. Residues 149-170 (AVIAVVVQSIVGCVIDSFMIGT) traverse the membrane as a helical segment. Topologically, residues 171 to 446 (IMAKMPRPKK…NISYRRESAI (276 aa)) are cytoplasmic. Positions 444-446 (SAI) match the PDZ-binding motif.

This sequence belongs to the inward rectifier-type potassium channel (TC 1.A.2.1) family. KCNJ4 subfamily. As to quaternary structure, homomultimeric and heteromultimeric association with KCNJ2 and KCNJ12. Interacts with DLG2 and DLG4. Associates, via its PDZ-recognition domain, with a complex containing LIN7A, LIN7B, LIN7C, DLG1, CASK and APBA1. Interacts with TAX1BP3. TAX1BP3 competes with LIN7 family members for KCNJ4 binding. As to expression, detected in kidney distal convoluted tubules (at protein level). Widely expressed throughout the brain. Also found in some peripheral tissues.

Its subcellular location is the cell membrane. The protein localises to the cytoplasmic vesicle membrane. It is found in the postsynaptic cell membrane. The catalysed reaction is K(+)(in) = K(+)(out). Inward rectifier potassium channels are characterized by a greater tendency to allow potassium to flow into the cell rather than out of it. Their voltage dependence is regulated by the concentration of extracellular potassium; as external potassium is raised, the voltage range of the channel opening shifts to more positive voltages. The inward rectification is mainly due to the blockage of outward current by internal magnesium. Can be blocked by extracellular barium and cesium. This is Inward rectifier potassium channel 4 (Kcnj4) from Rattus norvegicus (Rat).